We begin with the raw amino-acid sequence, 356 residues long: UDP-N-acetylglucosamine--N-acetylmuramyl-(pentapeptide) pyrophosphoryl-undecaprenol N-acetylglucosamine transferase (356 aa).

UDP-N-acetyl-alpha-D-glucosamine is bound by residues 12–14 (TGG), Asn-124, Arg-163, Ser-188, Ile-242, 261–266 (ALTVSE), and Gln-287.

The protein belongs to the glycosyltransferase 28 family. MurG subfamily.

The protein resides in the cell inner membrane. It carries out the reaction di-trans,octa-cis-undecaprenyl diphospho-N-acetyl-alpha-D-muramoyl-L-alanyl-D-glutamyl-meso-2,6-diaminopimeloyl-D-alanyl-D-alanine + UDP-N-acetyl-alpha-D-glucosamine = di-trans,octa-cis-undecaprenyl diphospho-[N-acetyl-alpha-D-glucosaminyl-(1-&gt;4)]-N-acetyl-alpha-D-muramoyl-L-alanyl-D-glutamyl-meso-2,6-diaminopimeloyl-D-alanyl-D-alanine + UDP + H(+). The protein operates within cell wall biogenesis; peptidoglycan biosynthesis. In terms of biological role, cell wall formation. Catalyzes the transfer of a GlcNAc subunit on undecaprenyl-pyrophosphoryl-MurNAc-pentapeptide (lipid intermediate I) to form undecaprenyl-pyrophosphoryl-MurNAc-(pentapeptide)GlcNAc (lipid intermediate II). This Pseudomonas fluorescens (strain SBW25) protein is UDP-N-acetylglucosamine--N-acetylmuramyl-(pentapeptide) pyrophosphoryl-undecaprenol N-acetylglucosamine transferase.